The primary structure comprises 156 residues: MKLQLVAVGTKMPDWVQTGFMDYLHRFPKDMPFELTEIPAGKRGKNADIKRILEKEGEQMLAAVGKGNRIVTLDIPGTPWETPQLAQQLERWKQDGRNVSLLIGGPEGLAPACKAAAEQSWSLSPLTLPHPLVRVLVAESLYRAWSITTNHPYHRE.

S-adenosyl-L-methionine contacts are provided by residues leucine 73, glycine 104, and 123–128 (LSPLTL).

It belongs to the RNA methyltransferase RlmH family. Homodimer.

Its subcellular location is the cytoplasm. It carries out the reaction pseudouridine(1915) in 23S rRNA + S-adenosyl-L-methionine = N(3)-methylpseudouridine(1915) in 23S rRNA + S-adenosyl-L-homocysteine + H(+). In terms of biological role, specifically methylates the pseudouridine at position 1915 (m3Psi1915) in 23S rRNA. The polypeptide is Ribosomal RNA large subunit methyltransferase H (Serratia proteamaculans (strain 568)).